Reading from the N-terminus, the 1278-residue chain is Dynactin subunit 1 (1278 aa).

The segment at 1-25 (MAQSKRHVYSRTPSGSRMSAEASAR) is disordered. The CAP-Gly domain maps to 48 to 90 (GATLFATGKWVGVILDEAKGKNDGTVQGRKYFTCDEGHGIFVR). The segment at 100–223 (GADTTSPETP…SKEEEGLRAQ (124 aa)) is disordered. A compositionally biased stretch (polar residues) spans 102–114 (DTTSPETPDSSAS). Residue Thr-108 is modified to Phosphothreonine. Residues 129–152 (SKLRGLKPKKAPTARKTTTRRPKP) are compositionally biased toward basic residues. A phosphothreonine; by SLK mark is found at Thr-145, Thr-146, and Thr-147. Positions 161 to 184 (AGASSSLGPSGSASAGELSSSEPS) are enriched in low complexity. Ser-179 is subject to Phosphoserine; by PLK1. Ser-212 is subject to Phosphoserine; by CDK1. 3 coiled-coil regions span residues 213 to 547 (PSKE…RQQQ), 943 to 1049 (LKLE…EGLR), and 1182 to 1211 (SAQL…KETV). The span at 214–223 (SKEEEGLRAQ) shows a compositional bias: basic and acidic residues. An interaction with HPS6 region spans residues 911–1278 (EYDAERPPSK…LHQLHSRLIS (368 aa)).

This sequence belongs to the dynactin 150 kDa subunit family. As to quaternary structure, monomer and homodimer. Subunit of dynactin, a multiprotein complex part of a tripartite complex with dynein and a adapter, such as BICDL1, BICD2 or HOOK3. The dynactin complex is built around ACTR1A/ACTB filament and consists of an actin-related filament composed of a shoulder domain, a pointed end and a barbed end. Its length is defined by its flexible shoulder domain. The soulder is composed of 2 DCTN1 subunits, 4 DCTN2 and 2 DCTN3. DCTN1/p150(glued) binds directly to microtubules and to cytoplasmic dynein. The 4 DCNT2 (via N-terminus) bind the ACTR1A filament and act as molecular rulers to determine the length. The pointed end is important for binding dynein-dynactin cargo adapters. Consists of 4 subunits: ACTR10, DCNT4, DCTN5 and DCTN6. The barbed end is composed of a CAPZA1:CAPZB heterodimers, which binds ACTR1A/ACTB filament and dynactin and stabilizes dynactin. Interacts with the C-terminus of MAPRE1, MAPRE2 and MAPRE3. Interacts (via C-terminus) with SNX6. Interacts with CLN3, DYNAP, ECPAS and FBXL5. Interacts with MISP; this interaction regulates its distribution at the cell cortex. Interacts with CEP131. Interacts with CEP126. Interacts with CLIP1. Interacts with dynein intermediate chain and dynein heavy chain. Interacts with PLK1 (via POLO-box domain). Interacts with TBCB. Binds preferentially to tyrosinated microtubules than to detyrosinated microtubules. Interacts with PARD6A. Interacts with HPS6. Interacts with KIF3A. Interacts with BICD2. Interacts with DST (isoform 9). Interacts with DST (isoform 1). Identified in a complex with MREG and RILP. Interacts with BCCIP (isoform 2/alpha). Interacts with DCDC1. Interacts with AKNA. Interacts with DYNC1I2. Interacts with RUFY3 and RUFY4. Post-translationally, ubiquitinated by a SCF complex containing FBXL5, leading to its degradation by the proteasome. Phosphorylation by SLK at Thr-145, Thr-146 and Thr-147 targets DCTN1 to the centrosome. It is uncertain if SLK phosphorylates all three threonines or one or two of them. PLK1-mediated phosphorylation at Ser-179 is essential for its localization in the nuclear envelope, promotes its dissociation from microtubules during early mitosis and positively regulates nuclear envelope breakdown during prophase. Brain.

It localises to the cytoplasm. The protein resides in the cytoskeleton. The protein localises to the microtubule organizing center. It is found in the centrosome. Its subcellular location is the centriole. It localises to the spindle. The protein resides in the nucleus envelope. The protein localises to the cell cortex. Part of the dynactin complex that activates the molecular motor dynein for ultra-processive transport along microtubules. Plays a key role in dynein-mediated retrograde transport of vesicles and organelles along microtubules by recruiting and tethering dynein to microtubules. Binds to both dynein and microtubules providing a link between specific cargos, microtubules and dynein. Essential for targeting dynein to microtubule plus ends, recruiting dynein to membranous cargos and enhancing dynein processivity (the ability to move along a microtubule for a long distance without falling off the track). Can also act as a brake to slow the dynein motor during motility along the microtubule. Can regulate microtubule stability by promoting microtubule formation, nucleation and polymerization and by inhibiting microtubule catastrophe in neurons. Inhibits microtubule catastrophe by binding both to microtubules and to tubulin, leading to enhanced microtubule stability along the axon. Plays a role in metaphase spindle orientation. Plays a role in centriole cohesion and subdistal appendage organization and function. Its recruitment to the centriole in a KIF3A-dependent manner is essential for the maintenance of centriole cohesion and the formation of subdistal appendage. Also required for microtubule anchoring at the mother centriole. Plays a role in primary cilia formation. In Homo sapiens (Human), this protein is Dynactin subunit 1.